The primary structure comprises 726 residues: Catalase-peroxidase (726 aa).

The tryptophyl-tyrosyl-methioninium (Trp-Tyr) (with M-240) cross-link spans 91 to 214 (WHAAGTYRIG…LAAVQMGLIY (124 aa)). H92 acts as the Proton acceptor in catalysis. The segment at residues 214 to 240 (YVNPEGPNGNPDPVAAAIDIRETFRRM) is a cross-link (tryptophyl-tyrosyl-methioninium (Tyr-Met) (with W-91)). H255 is a heme b binding site. The interval 335–362 (AHQWKPKGNAGAGTVPDPADPSKRRSPS) is disordered.

The protein belongs to the peroxidase family. Peroxidase/catalase subfamily. In terms of assembly, homodimer or homotetramer. Requires heme b as cofactor. In terms of processing, formation of the three residue Trp-Tyr-Met cross-link is important for the catalase, but not the peroxidase activity of the enzyme.

The catalysed reaction is H2O2 + AH2 = A + 2 H2O. It carries out the reaction 2 H2O2 = O2 + 2 H2O. Functionally, bifunctional enzyme with both catalase and broad-spectrum peroxidase activity. The polypeptide is Catalase-peroxidase (Cupriavidus metallidurans (strain ATCC 43123 / DSM 2839 / NBRC 102507 / CH34) (Ralstonia metallidurans)).